Consider the following 142-residue polypeptide: Phosphoribosyl-AMP cyclohydrolase (142 aa).

Asp92 lines the Mg(2+) pocket. Cys93 lines the Zn(2+) pocket. Asp94 and Asp96 together coordinate Mg(2+). 2 residues coordinate Zn(2+): Cys109 and Cys116.

Belongs to the PRA-CH family. In terms of assembly, homodimer. Mg(2+) serves as cofactor. Requires Zn(2+) as cofactor.

The protein localises to the cytoplasm. It catalyses the reaction 1-(5-phospho-beta-D-ribosyl)-5'-AMP + H2O = 1-(5-phospho-beta-D-ribosyl)-5-[(5-phospho-beta-D-ribosylamino)methylideneamino]imidazole-4-carboxamide. It functions in the pathway amino-acid biosynthesis; L-histidine biosynthesis; L-histidine from 5-phospho-alpha-D-ribose 1-diphosphate: step 3/9. Catalyzes the hydrolysis of the adenine ring of phosphoribosyl-AMP. The polypeptide is Phosphoribosyl-AMP cyclohydrolase (Alcanivorax borkumensis (strain ATCC 700651 / DSM 11573 / NCIMB 13689 / SK2)).